The primary structure comprises 420 residues: 3-isopropylmalate dehydratase large subunit (420 aa).

[4Fe-4S] cluster contacts are provided by Cys300, Cys361, and Cys364.

This sequence belongs to the aconitase/IPM isomerase family. LeuC type 2 subfamily. Heterodimer of LeuC and LeuD. It depends on [4Fe-4S] cluster as a cofactor.

It carries out the reaction (2R,3S)-3-isopropylmalate = (2S)-2-isopropylmalate. It functions in the pathway amino-acid biosynthesis; L-leucine biosynthesis; L-leucine from 3-methyl-2-oxobutanoate: step 2/4. In terms of biological role, catalyzes the isomerization between 2-isopropylmalate and 3-isopropylmalate, via the formation of 2-isopropylmaleate. This is 3-isopropylmalate dehydratase large subunit from Endomicrobium trichonymphae.